The primary structure comprises 67 residues: Large ribosomal subunit protein bL35 (67 aa).

This sequence belongs to the bacterial ribosomal protein bL35 family.

The protein is Large ribosomal subunit protein bL35 of Leptothrix cholodnii (strain ATCC 51168 / LMG 8142 / SP-6) (Leptothrix discophora (strain SP-6)).